The following is a 1334-amino-acid chain: WASH complex subunit 2 (1334 aa).

Residues 1–219 form a sufficient for interaction with WASHC3, WASHC4 and WASHC5; required for interaction with WASHC1 region; sequence MNRTSPDSER…VGSDRGSIVD (219 aa). Phosphoserine occurs at positions 157, 159, 204, 205, and 209. Residues 201-213 show a composition bias toward low complexity; the sequence is GELSSEEGSVGSD. Residues 201-471 are disordered; sequence GELSSEEGSV…SKPSKTDKVK (271 aa). Composition is skewed to acidic residues over residues 219-232 and 249-274; these read DSED…SDED and SDEE…EDIE. Ser-284 is modified (phosphoserine). Over residues 289-324 the composition is skewed to basic and acidic residues; it reads LAARIKGDISNQRKEGQTDGKPQKTVKEKKERRTPA. At Thr-322 the chain carries Phosphothreonine. Residues 347–594 are sufficient for interaction with CCDC93; sequence SRGGLFSNGQ…QTSSLQPQSQ (248 aa). Residues 348–1334 are interaction with VPS35; sequence RGGLFSNGQG…DDPLNAFGSQ (987 aa). Positions 358-368 match the LFa 1 motif; sequence LFDDEDESDLF. Phosphoserine is present on Ser-388. 2 consecutive short sequence motifs (LFa) follow at residues 441–457 and 476–485; these read LFDD…NNFF and IFDDDEGDLF. Positions 442–454 are enriched in acidic residues; that stretch reads FDDDDNDNDEDDN. The tract at residues 492 to 650 is disordered; that stretch reads LPAASVSQTH…DSGATQGQEA (159 aa). Residues 513–530 are compositionally biased toward polar residues; sequence LPSSKNLKLVSETKTQKG. Short sequence motifs (LFa) lie at residues 531 to 542 and 566 to 577; these read LFSDEEDSEDLF and LFGDEDEEDSLF. Phosphoserine occurs at positions 533 and 538. Residues 541 to 561 are compositionally biased toward low complexity; it reads LFSSQSSSKPKSASLPSSQPP. Composition is skewed to polar residues over residues 584 to 594 and 601 to 611; these read KQTSSLQPQSQ and EQPSKKTSALL. 2 positions are modified to phosphoserine: Ser-613 and Ser-614. The segment covering 625–639 has biased composition (basic and acidic residues); sequence SHTKLASDNKSKGEL. 2 short sequence motifs (LFa) span residues 658 to 670 and 686 to 698; these read LFED…VDLF and LFED…SSLF. The segment at 691-837 is disordered; sequence AESGSSLFGL…SRPKSTGVFQ (147 aa). Residues Ser-723, Ser-747, Ser-752, Ser-783, and Ser-798 each carry the phosphoserine modification. Over residues 800–811 the composition is skewed to acidic residues; that stretch reads FDEDEDKVEDES. Residues 818–830 show a composition bias toward basic and acidic residues; sequence DGREKGLKTDSRP. 2 consecutive short sequence motifs (LFa) follow at residues 835 to 843 and 852 to 858; these read VFQDEELLF and DPDVDLF. 2 disordered regions span residues 862–948 and 1014–1225; these read KKIR…PSSR and AQAD…SKTH. 2 positions are modified to phosphoserine: Ser-870 and Ser-873. The LFa 10 motif lies at 874–884; it reads LFGDDEDDDLF. A compositionally biased stretch (basic and acidic residues) spans 894 to 906; sequence PEKKGTLKKDHPV. Over residues 908-919 the composition is skewed to polar residues; sequence LKNQDPLDSTQG. The interval 932 to 1334 is interaction with phospholipids; that stretch reads QDSSGLTPFK…DDPLNAFGSQ (403 aa). Positions 1023–1041 are enriched in basic residues; the sequence is NKSRVKVRGKRRPQTRAAR. The segment at 1024–1042 is required for interaction with F-actin-capping protein subunit alpha (CAPZA1 or CAPZA2 or CAPZA3); it reads KSRVKVRGKRRPQTRAARR. A phosphoserine mark is found at Ser-1049, Ser-1067, Ser-1084, and Ser-1109. 3 short sequence motifs (LFa) span residues 1124-1131, 1164-1178, and 1194-1202; these read LFDSGDIF, AFPD…EDLF, and LLEDEEDLF. Phosphoserine occurs at positions 1169, 1172, and 1173. A compositionally biased stretch (basic and acidic residues) spans 1203 to 1225; it reads ADPRGKKNERKPDSHQDSVSKTH. 3 short sequence motifs (LFa) span residues 1227-1233, 1255-1263, and 1283-1292; these read IFEDDIF, LFDDNIDIF, and MFDDDTDDIF. The interval 1294-1334 is disordered; it reads SGLQAKASKPKSQSAEAASEQRSEHKVASIFDDPLNAFGSQ. Residues 1297 to 1311 show a composition bias toward low complexity; sequence QAKASKPKSQSAEAA. Residues 1323–1331 carry the LFa 17 motif; the sequence is IFDDPLNAF. Ser-1333 carries the post-translational modification Phosphoserine.

This sequence belongs to the FAM21 family. In terms of assembly, component of the WASH core complex also described as WASH regulatory complex (SHRC) composed of WASHC1, WASHC2, WASHC3, WASHC4 and WASHC5; in the complex interacts (via N-terminus) directly with WASHC1. The WASH core complex associates with the F-actin-capping protein dimer (formed by CAPZA1, CAPZA2 or CAPZA3 and CAPZB) in a transient or substoichiometric manner which was initially described as WASH complex. Interacts with VPS35; mediates the association with the retromer CSC complex. Interacts with FKBP15. Interacts with CCDC93, CCDC22, VPS35L; indicative for an association of the WASH core complex with the CCC and retriever complexes. Directly interacts with TBC1D23.

It localises to the early endosome membrane. It is found in the cell membrane. Functionally, acts as a component of the WASH core complex that functions as a nucleation-promoting factor (NPF) at the surface of endosomes, where it recruits and activates the Arp2/3 complex to induce actin polymerization, playing a key role in the fission of tubules that serve as transport intermediates during endosome sorting. Mediates the recruitment of the WASH core complex to endosome membranes via binding to phospholipids and VPS35 of the retromer CSC. Mediates the recruitment of the F-actin-capping protein dimer to the WASH core complex probably promoting localized F-actin polymerization needed for vesicle scission. Via its C-terminus binds various phospholipids, most strongly phosphatidylinositol 4-phosphate (PtdIns-(4)P), phosphatidylinositol 5-phosphate (PtdIns-(5)P) and phosphatidylinositol 3,5-bisphosphate (PtdIns-(3,5)P2). Involved in the endosome-to-plasma membrane trafficking and recycling of SNX27-retromer-dependent cargo proteins, such as GLUT1. Required for the association of DNAJC13, ENTR1, ANKRD50 with retromer CSC subunit VPS35. Required for the endosomal recruitment of CCC and retriever complexes subunits COMMD1 and CCDC93 as well as the retrievere complex subunit VPS35L. This is WASH complex subunit 2 from Mus musculus (Mouse).